A 340-amino-acid chain; its full sequence is Beta-ketoacyl-[acyl-carrier-protein] synthase III (340 aa).

Residues cysteine 122 and histidine 260 contribute to the active site. Residues 261–265 (QANTR) form an ACP-binding region. Residue asparagine 291 is part of the active site.

This sequence belongs to the thiolase-like superfamily. FabH family. Homodimer.

It localises to the cytoplasm. It catalyses the reaction malonyl-[ACP] + acetyl-CoA + H(+) = 3-oxobutanoyl-[ACP] + CO2 + CoA. Its pathway is lipid metabolism; fatty acid biosynthesis. Its function is as follows. Catalyzes the condensation reaction of fatty acid synthesis by the addition to an acyl acceptor of two carbons from malonyl-ACP. Catalyzes the first condensation reaction which initiates fatty acid synthesis and may therefore play a role in governing the total rate of fatty acid production. Possesses both acetoacetyl-ACP synthase and acetyl transacylase activities. Its substrate specificity determines the biosynthesis of branched-chain and/or straight-chain of fatty acids. The polypeptide is Beta-ketoacyl-[acyl-carrier-protein] synthase III (Mycobacteroides abscessus (strain ATCC 19977 / DSM 44196 / CCUG 20993 / CIP 104536 / JCM 13569 / NCTC 13031 / TMC 1543 / L948) (Mycobacterium abscessus)).